We begin with the raw amino-acid sequence, 568 residues long: Urease subunit alpha (568 aa).

Residues 130-568 (GGIDSHIHFI…LPMAQRYFLF (439 aa)) form the Urease domain. Ni(2+)-binding residues include His-135, His-137, and Lys-218. Position 218 is an N6-carboxylysine (Lys-218). A substrate-binding site is contributed by His-220. Residues His-247 and His-273 each coordinate Ni(2+). His-321 serves as the catalytic Proton donor. Position 361 (Asp-361) interacts with Ni(2+).

This sequence belongs to the metallo-dependent hydrolases superfamily. Urease alpha subunit family. Heterotrimer of UreA (gamma), UreB (beta) and UreC (alpha) subunits. Three heterotrimers associate to form the active enzyme. Requires Ni cation as cofactor. Post-translationally, carboxylation allows a single lysine to coordinate two nickel ions.

The protein resides in the cytoplasm. It catalyses the reaction urea + 2 H2O + H(+) = hydrogencarbonate + 2 NH4(+). It functions in the pathway nitrogen metabolism; urea degradation; CO(2) and NH(3) from urea (urease route): step 1/1. The chain is Urease subunit alpha from Nitrosospira multiformis (strain ATCC 25196 / NCIMB 11849 / C 71).